Consider the following 27-residue polypeptide: Chitinase 47 kDa (27 aa).

Residues 3–27 (SKVVGYFTEWGTYDRKYYVKNIEXS) form the GH18 domain.

The protein belongs to the glycosyl hydrolase 18 family. Chitinase class II subfamily. As to quaternary structure, homodimer.

It carries out the reaction Random endo-hydrolysis of N-acetyl-beta-D-glucosaminide (1-&gt;4)-beta-linkages in chitin and chitodextrins.. Able to cleave chitin oligomers from N=3 to 6. In Streptomyces olivaceoviridis (Streptomyces corchorusii), this protein is Chitinase 47 kDa.